Here is a 282-residue protein sequence, read N- to C-terminus: 4-hydroxy-3-methylbut-2-enyl diphosphate reductase (282 aa).

Residue Cys-14 coordinates [4Fe-4S] cluster. (2E)-4-hydroxy-3-methylbut-2-enyl diphosphate-binding residues include His-43 and His-78. Residues His-43 and His-78 each contribute to the dimethylallyl diphosphate site. 2 residues coordinate isopentenyl diphosphate: His-43 and His-78. Cys-100 is a [4Fe-4S] cluster binding site. His-128 is a (2E)-4-hydroxy-3-methylbut-2-enyl diphosphate binding site. His-128 provides a ligand contact to dimethylallyl diphosphate. Residue His-128 coordinates isopentenyl diphosphate. Glu-130 acts as the Proton donor in catalysis. A (2E)-4-hydroxy-3-methylbut-2-enyl diphosphate-binding site is contributed by Thr-164. Residue Cys-192 participates in [4Fe-4S] cluster binding. (2E)-4-hydroxy-3-methylbut-2-enyl diphosphate is bound by residues Ser-220, Ser-221, Asn-222, and Ser-266. Positions 220, 221, 222, and 266 each coordinate dimethylallyl diphosphate. Residues Ser-220, Ser-221, Asn-222, and Ser-266 each contribute to the isopentenyl diphosphate site.

The protein belongs to the IspH family. The cofactor is [4Fe-4S] cluster.

The enzyme catalyses isopentenyl diphosphate + 2 oxidized [2Fe-2S]-[ferredoxin] + H2O = (2E)-4-hydroxy-3-methylbut-2-enyl diphosphate + 2 reduced [2Fe-2S]-[ferredoxin] + 2 H(+). The catalysed reaction is dimethylallyl diphosphate + 2 oxidized [2Fe-2S]-[ferredoxin] + H2O = (2E)-4-hydroxy-3-methylbut-2-enyl diphosphate + 2 reduced [2Fe-2S]-[ferredoxin] + 2 H(+). The protein operates within isoprenoid biosynthesis; dimethylallyl diphosphate biosynthesis; dimethylallyl diphosphate from (2E)-4-hydroxy-3-methylbutenyl diphosphate: step 1/1. It functions in the pathway isoprenoid biosynthesis; isopentenyl diphosphate biosynthesis via DXP pathway; isopentenyl diphosphate from 1-deoxy-D-xylulose 5-phosphate: step 6/6. Catalyzes the conversion of 1-hydroxy-2-methyl-2-(E)-butenyl 4-diphosphate (HMBPP) into a mixture of isopentenyl diphosphate (IPP) and dimethylallyl diphosphate (DMAPP). Acts in the terminal step of the DOXP/MEP pathway for isoprenoid precursor biosynthesis. In Clostridium perfringens (strain ATCC 13124 / DSM 756 / JCM 1290 / NCIMB 6125 / NCTC 8237 / Type A), this protein is 4-hydroxy-3-methylbut-2-enyl diphosphate reductase.